The primary structure comprises 76 residues: Dermaseptin-S7 (76 aa).

The first 22 residues, 1 to 22 (MDILKKSLFLVLFLGLISLSFC), serve as a signal peptide directing secretion. The propeptide occupies 23 to 45 (EEEKRENEDEEEQEDDEQSEEKR). The segment at 25–45 (EKRENEDEEEQEDDEQSEEKR) is disordered. Residues 30–41 (EDEEEQEDDEQS) show a composition bias toward acidic residues. Glutamine amide is present on Q73. The propeptide occupies 75–76 (EQ).

The protein belongs to the frog skin active peptide (FSAP) family. Dermaseptin subfamily. In terms of tissue distribution, expressed by the skin glands.

It localises to the secreted. Antimicrobial peptide. The sequence is that of Dermaseptin-S7 from Phyllomedusa sauvagei (Sauvage's leaf frog).